We begin with the raw amino-acid sequence, 273 residues long: Hemin import ATP-binding protein HmuV (273 aa).

The ABC transporter domain occupies 2–256; it reads LTAHHLDVAR…AHIAQCYGFA (255 aa). 34-41 provides a ligand contact to ATP; the sequence is GRNGAGKS.

It belongs to the ABC transporter superfamily. Heme (hemin) importer (TC 3.A.1.14.5) family. As to quaternary structure, the complex is composed of two ATP-binding proteins (HmuV), two transmembrane proteins (HmuU) and a solute-binding protein (HmuT).

It is found in the cell inner membrane. In terms of biological role, part of the ABC transporter complex HmuTUV involved in hemin import. Responsible for energy coupling to the transport system. This chain is Hemin import ATP-binding protein HmuV, found in Burkholderia ambifaria (strain ATCC BAA-244 / DSM 16087 / CCUG 44356 / LMG 19182 / AMMD) (Burkholderia cepacia (strain AMMD)).